A 765-amino-acid polypeptide reads, in one-letter code: Phosphoribosylformylglycinamidine synthase subunit PurL (765 aa).

A compositionally biased stretch (polar residues) spans 1–13 (MTVSPTSAPTQAI). Residues 1–32 (MTVSPTSAPTQAIDTVERAATTPDEPQPFGEL) are disordered. Residue His-65 is part of the active site. ATP contacts are provided by Tyr-68 and Lys-112. Residue Glu-114 coordinates Mg(2+). Substrate-binding positions include 115–118 (SHNH) and Arg-137. His-116 serves as the catalytic Proton acceptor. Asp-138 lines the Mg(2+) pocket. Gln-263 provides a ligand contact to substrate. Asp-291 contributes to the Mg(2+) binding site. 335 to 337 (ESQ) contributes to the substrate binding site. Residues Asn-523 and Gly-560 each coordinate ATP. Asn-561 serves as a coordination point for Mg(2+). Position 563 (Ser-563) interacts with substrate.

Belongs to the FGAMS family. In terms of assembly, monomer. Part of the FGAM synthase complex composed of 1 PurL, 1 PurQ and 2 PurS subunits.

It localises to the cytoplasm. The catalysed reaction is N(2)-formyl-N(1)-(5-phospho-beta-D-ribosyl)glycinamide + L-glutamine + ATP + H2O = 2-formamido-N(1)-(5-O-phospho-beta-D-ribosyl)acetamidine + L-glutamate + ADP + phosphate + H(+). Its pathway is purine metabolism; IMP biosynthesis via de novo pathway; 5-amino-1-(5-phospho-D-ribosyl)imidazole from N(2)-formyl-N(1)-(5-phospho-D-ribosyl)glycinamide: step 1/2. In terms of biological role, part of the phosphoribosylformylglycinamidine synthase complex involved in the purines biosynthetic pathway. Catalyzes the ATP-dependent conversion of formylglycinamide ribonucleotide (FGAR) and glutamine to yield formylglycinamidine ribonucleotide (FGAM) and glutamate. The FGAM synthase complex is composed of three subunits. PurQ produces an ammonia molecule by converting glutamine to glutamate. PurL transfers the ammonia molecule to FGAR to form FGAM in an ATP-dependent manner. PurS interacts with PurQ and PurL and is thought to assist in the transfer of the ammonia molecule from PurQ to PurL. The protein is Phosphoribosylformylglycinamidine synthase subunit PurL of Mycobacterium avium (strain 104).